A 913-amino-acid chain; its full sequence is DNA polymerase I (913 aa).

The 5'-3' exonuclease domain maps to Met-1 to Pro-305. The 3'-5' exonuclease domain maps to Ile-306–Glu-501. The tract at residues Ser-505–His-913 is polymerase.

It belongs to the DNA polymerase type-A family. Single-chain monomer with multiple functions.

It catalyses the reaction DNA(n) + a 2'-deoxyribonucleoside 5'-triphosphate = DNA(n+1) + diphosphate. Its function is as follows. In addition to polymerase activity, this DNA polymerase exhibits 3'-5' and 5'-3' exonuclease activity. The protein is DNA polymerase I (polA) of Pseudomonas aeruginosa (strain ATCC 15692 / DSM 22644 / CIP 104116 / JCM 14847 / LMG 12228 / 1C / PRS 101 / PAO1).